The following is a 280-amino-acid chain: F420-dependent methylenetetrahydromethanopterin dehydrogenase (280 aa).

The protein belongs to the MTD family.

It carries out the reaction 5,10-methylenetetrahydromethanopterin + oxidized coenzyme F420-(gamma-L-Glu)(n) + 2 H(+) = 5,10-methenyl-5,6,7,8-tetrahydromethanopterin + reduced coenzyme F420-(gamma-L-Glu)(n). It functions in the pathway one-carbon metabolism; methanogenesis from CO(2); 5,10-methylene-5,6,7,8-tetrahydromethanopterin from 5,10-methenyl-5,6,7,8-tetrahydromethanopterin (coenzyme F420 route): step 1/1. In terms of biological role, catalyzes the reversible reduction of methenyl-H(4)MPT(+) to methylene-H(4)MPT. This is F420-dependent methylenetetrahydromethanopterin dehydrogenase from Methanoculleus marisnigri (strain ATCC 35101 / DSM 1498 / JR1).